A 222-amino-acid polypeptide reads, in one-letter code: Dense granule protein 3 (222 aa).

Helical transmembrane passes span Leu-22–Ala-42 and Ile-162–Leu-182. Residues Lys-219–Thr-222 carry the Prevents secretion from ER motif.

Homodimer. Interacts (via N-terminus) with human host CAMLG (via N-terminus).

The protein resides in the cytoplasm. It localises to the host endoplasmic reticulum. It is found in the parasitophorous vacuole membrane. Functionally, direct host-parasite interaction occurs at the cytoplasmic faces of the parasitophorous vacuole membrane (PVM) and the host endoplasmic reticulum (ER) membrane via GRA3 and host CAMLG association. Direct insertion of GRA3 ER retrieval motif into the host ER membrane contributes to the host ER recruitment to the PVM. This chain is Dense granule protein 3, found in Toxoplasma gondii.